We begin with the raw amino-acid sequence, 171 residues long: Ribosome maturation factor RimM (171 aa).

Positions 96 to 168 constitute a PRC barrel domain; that stretch reads EDGFYDHELE…TATITPPEGL (73 aa).

Belongs to the RimM family. In terms of assembly, binds ribosomal protein uS19.

The protein resides in the cytoplasm. An accessory protein needed during the final step in the assembly of 30S ribosomal subunit, possibly for assembly of the head region. Essential for efficient processing of 16S rRNA. May be needed both before and after RbfA during the maturation of 16S rRNA. It has affinity for free ribosomal 30S subunits but not for 70S ribosomes. In Corynebacterium glutamicum (strain R), this protein is Ribosome maturation factor RimM.